The primary structure comprises 281 residues: MTNAKKVRARRKIRRTAAGAMALAVGLTGAGILVNAVTPDAQVATAQQDEQALIQEGKDLYDVACITCHGANLQGVKDRGPSLIGVGSGATYFQVHSGRMPMLRNEAQAKRKTPRYSEAQTLAIAAYVEANGGGPSIVYNKDGSVAMESLRGANYKDGIDPADVARGSDLFRLNCASCHNFTGRGGALSSGKYAPVLDPANEQEIYQAMLTGPQNMPKFSDRQLSADEKKDIIAYIKSAKETPSQGGWNLGGLGPVTEGMMMWLVGIVVLVAAAMWIGSRS.

The chain crosses the membrane as a helical span at residues 17-37 (AAGAMALAVGLTGAGILVNAV). Cytochrome c domains are found at residues 52–132 (ALIQ…EANG) and 162–240 (ADVA…KSAK). Heme c-binding residues include cysteine 65, cysteine 68, histidine 69, cysteine 175, cysteine 178, and histidine 179. A helical membrane pass occupies residues 259 to 279 (GMMMWLVGIVVLVAAAMWIGS).

In terms of assembly, the cytochrome bc1 complex is composed of a cytochrome b (QcrB), the Rieske iron-sulfur protein (QcrA) and a diheme cytochrome c (QcrC) subunit. The bc1 complex forms a supercomplex with cytochrome c oxidase (cytochrome aa3). Binds 2 heme c groups covalently per subunit.

Its subcellular location is the cell membrane. It catalyses the reaction a quinol + 2 Fe(III)-[cytochrome c](out) = a quinone + 2 Fe(II)-[cytochrome c](out) + 2 H(+)(out). Its function is as follows. Cytochrome c1 subunit of the cytochrome bc1 complex, an essential component of the respiratory electron transport chain required for ATP synthesis. The bc1 complex catalyzes the oxidation of menaquinol and the reduction of cytochrome c in the respiratory chain. The bc1 complex operates through a Q-cycle mechanism that couples electron transfer to generation of the proton gradient that drives ATP synthesis. This Corynebacterium diphtheriae (strain ATCC 700971 / NCTC 13129 / Biotype gravis) protein is Cytochrome bc1 complex cytochrome c subunit (qcrC).